A 334-amino-acid polypeptide reads, in one-letter code: Chitin synthase export chaperone (334 aa).

7 consecutive transmembrane segments (helical) span residues 49–69, 88–108, 123–143, 159–179, 185–205, 220–240, and 250–270; these read IIFE…TVIM, FFYL…GVVP, GFSS…FQLY, LAAF…WAGL, VGLF…YVAM, LGDI…LYAF, and HYLD…MMVY.

Belongs to the CHS7 family. Interacts with CHS3.

Its subcellular location is the endoplasmic reticulum membrane. In terms of biological role, chaperone required for the export of the chitin synthase CHS3 from the endoplasmic reticulum. This chain is Chitin synthase export chaperone (CHS7), found in Gibberella zeae (strain ATCC MYA-4620 / CBS 123657 / FGSC 9075 / NRRL 31084 / PH-1) (Wheat head blight fungus).